The primary structure comprises 537 residues: Probable glucomannan 4-beta-mannosyltransferase 15 (537 aa).

Residues 50 to 70 (FIVPLFKCIVVMCLIISLLVF) form a helical membrane-spanning segment. Residue aspartate 150 is part of the active site. 2 residues coordinate substrate: aspartate 209 and aspartate 211. The active site involves aspartate 303. 4 consecutive transmembrane segments (helical) span residues 382-402 (IVVH…SVFL), 418-438 (VITL…IFWV), 494-514 (EMMM…FGNA), and 515-535 (FLYL…VGFV).

Belongs to the glycosyltransferase 2 family. Plant cellulose synthase-like A subfamily.

The protein resides in the golgi apparatus membrane. The catalysed reaction is GDP-mannose + (glucomannan)n = GDP + (glucomannan)n+1.. Probable mannan synthase which consists of a 4-beta-mannosyltransferase activity on mannan using GDP-mannose. The beta-1,4-mannan product is the backbone for galactomannan synthesis by galactomannan galactosyltransferase. Galactomannan is a noncellulosic polysaccharides of plant cell wall. In Arabidopsis thaliana (Mouse-ear cress), this protein is Probable glucomannan 4-beta-mannosyltransferase 15.